The primary structure comprises 91 residues: uncharacterized protein (91 aa).

3 consecutive transmembrane segments (helical) span residues 4 to 21 (YAIISFLLGIAFGFLRRG), 28 to 50 (IIEVIFVSLLLGLVSGIALSHAV), and 60 to 82 (VKAFGLIVAALIYAIFFAAGTYL).

The protein resides in the cell membrane. This is an uncharacterized protein from Archaeoglobus fulgidus (strain ATCC 49558 / DSM 4304 / JCM 9628 / NBRC 100126 / VC-16).